The primary structure comprises 328 residues: D-cysteine desulfhydrase (328 aa).

Lys-51 bears the N6-(pyridoxal phosphate)lysine mark.

It belongs to the ACC deaminase/D-cysteine desulfhydrase family. Homodimer. Requires pyridoxal 5'-phosphate as cofactor.

It carries out the reaction D-cysteine + H2O = hydrogen sulfide + pyruvate + NH4(+) + H(+). Functionally, catalyzes the alpha,beta-elimination reaction of D-cysteine and of several D-cysteine derivatives. It could be a defense mechanism against D-cysteine. The protein is D-cysteine desulfhydrase of Salmonella typhimurium (strain LT2 / SGSC1412 / ATCC 700720).